Here is an 89-residue protein sequence, read N- to C-terminus: Small ribosomal subunit protein bS20 (89 aa).

It belongs to the bacterial ribosomal protein bS20 family.

Binds directly to 16S ribosomal RNA. This chain is Small ribosomal subunit protein bS20, found in Wolbachia sp. subsp. Drosophila simulans (strain wRi).